We begin with the raw amino-acid sequence, 48 residues long: MPQLIPFFFFNQVVFTLISLSFIFFVFSKYILPWIVRLYVSRNQYNSL.

A helical membrane pass occupies residues Val-13–Leu-32.

Belongs to the ATPase protein 8 family. F-type ATPases have 2 components, CF(1) - the catalytic core - and CF(0) - the membrane proton channel.

It localises to the mitochondrion membrane. In terms of biological role, mitochondrial membrane ATP synthase (F(1)F(0) ATP synthase or Complex V) produces ATP from ADP in the presence of a proton gradient across the membrane which is generated by electron transport complexes of the respiratory chain. F-type ATPases consist of two structural domains, F(1) - containing the extramembraneous catalytic core and F(0) - containing the membrane proton channel, linked together by a central stalk and a peripheral stalk. During catalysis, ATP synthesis in the catalytic domain of F(1) is coupled via a rotary mechanism of the central stalk subunits to proton translocation. Part of the complex F(0) domain. Minor subunit located with subunit a in the membrane. The chain is ATP synthase protein 8 (ATP8) from Trichophyton rubrum (Athlete's foot fungus).